Consider the following 294-residue polypeptide: Glyceraldehyde-3-phosphate dehydrogenase (294 aa).

NAD(+)-binding residues include Asp-19, Arg-63, and Thr-105. D-glyceraldehyde 3-phosphate is bound by residues 134-136, Thr-165, 194-195, and Arg-217; these read SCT and TG. Cys-135 serves as the catalytic Nucleophile.

Belongs to the glyceraldehyde-3-phosphate dehydrogenase family. Homotetramer.

It localises to the cytoplasm. It catalyses the reaction D-glyceraldehyde 3-phosphate + phosphate + NAD(+) = (2R)-3-phospho-glyceroyl phosphate + NADH + H(+). Its pathway is carbohydrate degradation; glycolysis; pyruvate from D-glyceraldehyde 3-phosphate: step 1/5. Catalyzes the oxidative phosphorylation of glyceraldehyde 3-phosphate (G3P) to 1,3-bisphosphoglycerate (BPG) using the cofactor NAD. The first reaction step involves the formation of a hemiacetal intermediate between G3P and a cysteine residue, and this hemiacetal intermediate is then oxidized to a thioester, with concomitant reduction of NAD to NADH. The reduced NADH is then exchanged with the second NAD, and the thioester is attacked by a nucleophilic inorganic phosphate to produce BPG. In Shimwellia blattae (Escherichia blattae), this protein is Glyceraldehyde-3-phosphate dehydrogenase (gap).